We begin with the raw amino-acid sequence, 197 residues long: Transmembrane 4 L6 family member 5 (197 aa).

Topologically, residues 1–9 (MCTGKCARC) are cytoplasmic. The helical transmembrane segment at 10–30 (VGLSLITLCLVCIVANALLLV) threads the bilayer. Topologically, residues 31–46 (PNGETSWTNTNHLSLQ) are extracellular. Residues 47–67 (VWLMGGFIGGGLMVLCPGIAA) form a helical membrane-spanning segment. Residues 68–90 (VRAGGKGCCGAGCCGNRCRMLRS) lie on the Cytoplasmic side of the membrane. Residues 91 to 111 (VFSSAFGVLGAIYCLSVSGAG) form a helical membrane-spanning segment. The segment at 91 to 197 (VFSSAFGVLG…DCRKKQDTPH (107 aa)) is interaction with MTOR and CASTOR1. Over 112-157 (LRNGPRCLMNGEWGYHFEDTAGAYLLNRTLWDRCEAPPRVVPWNVT) the chain is Extracellular. 124–129 (WGYHFE) contributes to the L-arginine binding site. 2 N-linked (GlcNAc...) asparagine glycosylation sites follow: asparagine 138 and asparagine 155. A helical membrane pass occupies residues 158 to 178 (LFSLLVAASCLEIVLCGIQLV). Over 179-197 (NATIGVFCGDCRKKQDTPH) the chain is Cytoplasmic.

The protein belongs to the L6 tetraspanin family. As to quaternary structure, interacts with MTOR; the interaction is positively regulated by arginine and is negatively regulated by leucine. Interacts with SLC38A9. Interacts with SLC7A1; the interaction is negatively regulated by arginine. Interacts with CASTOR1; the interaction is positively regulated by leucine and is negatively regulated by arginine. Intestine. Overexpressed in pancreatic cancers.

It is found in the lysosome membrane. Its subcellular location is the cell membrane. Its function is as follows. Acts as a lysosomal membrane arginine sensor. Forms a complex with MTOR and SLC38A9 on lysosomal membranes in an arginine-regulated manner, leading to arginine efflux which enables the activation of mTORC1 which subsequently leads to RPS6KB1 and EIF4EBP1 phosphorylations. Facilitates cell cycle G1/S phase progression and the translocation of the CDK4-CCND1 complex into the nucleus. CDKN1B and RHOA/ROCK signaling activity are involved in TM4SF5-mediated acceleration of G1/S phase progression. This is Transmembrane 4 L6 family member 5 (TM4SF5) from Homo sapiens (Human).